The chain runs to 137 residues: Small ribosomal subunit protein uS11 (137 aa).

The disordered stretch occupies residues Glu116–Val137.

It belongs to the universal ribosomal protein uS11 family. In terms of assembly, part of the 30S ribosomal subunit.

In terms of biological role, located on the platform of the 30S subunit. In Pyrococcus abyssi (strain GE5 / Orsay), this protein is Small ribosomal subunit protein uS11.